We begin with the raw amino-acid sequence, 495 residues long: Monoamine oxidase N (495 aa).

The segment covering 1–19 has biased composition (polar residues); sequence MTSRDGYQWTPETGLTQGV. The segment at 1 to 23 is disordered; the sequence is MTSRDGYQWTPETGLTQGVPSLG. A Microbody targeting signal motif is present at residues 493 to 495; sequence ARL.

It belongs to the flavin monoamine oxidase family. The cofactor is FAD.

It localises to the peroxisome. The catalysed reaction is a secondary aliphatic amine + O2 + H2O = a primary amine + an aldehyde + H2O2. The protein is Monoamine oxidase N (maoN) of Aspergillus niger.